The following is a 610-amino-acid chain: Prolactin receptor (610 aa).

The N-terminal stretch at 1-19 (MPSALAFVLLVLNISLLKG) is a signal peptide. Over 20-229 (QSPPGKPEIH…EMPNDFTLKD (210 aa)) the chain is Extracellular. Fibronectin type-III domains lie at 22-122 (PPGK…IVEP) and 124-224 (PPRN…MPND). Cysteines 31 and 41 form a disulfide. Asn-54 carries an N-linked (GlcNAc...) asparagine glycan. Cys-70 and Cys-81 form a disulfide bridge. N-linked (GlcNAc...) asparagine glycans are attached at residues Asn-99 and Asn-127. Residues Asp-206 and His-207 each contribute to the Zn(2+) site. The WSXWS motif signature appears at 210–214 (WSRWS). Residues 230-253 (TTVWIIVAILSAVICLIMVWAVAL) traverse the membrane as a helical segment. The Cytoplasmic portion of the chain corresponds to 254–610 (KGYSMMTCIF…DPTCFMHSFH (357 aa)). The Box 1 motif signature appears at 262 to 270 (IFPPVPGPK). Disordered regions lie at residues 317–355 (DERL…HSLL), 458–482 (TGEE…TPWP), and 564–584 (AKKA…ASFT). A compositionally biased stretch (basic and acidic residues) spans 318 to 327 (ERLMPSHSKE). The span at 345–354 (GHGSYDSHSL) shows a compositional bias: low complexity.

This sequence belongs to the type I cytokine receptor family. Type 1 subfamily. Interacts with SMARCA1. Interacts with NEK3 and VAV2 and this interaction is prolactin-dependent.

The protein localises to the membrane. Its function is as follows. This is a receptor for the anterior pituitary hormone prolactin. In Rattus norvegicus (Rat), this protein is Prolactin receptor (Prlr).